A 1383-amino-acid polypeptide reads, in one-letter code: Putative autophagy-related protein 11 (1383 aa).

2 coiled-coil regions span residues 16–49 (DKNN…YELN) and 117–324 (NLFL…QNKE). Basic and acidic residues-rich tracts occupy residues 1151-1224 (EEEK…EDRK) and 1233-1249 (HSSD…KTKE). A disordered region spans residues 1151–1249 (EEEKKKNEEE…KYNKKEKTKE (99 aa)).

The protein belongs to the ATG11 family.

Its function is as follows. Involved in cytoplasm to vacuole transport (Cvt), pexophagy, mitophagy and nucleophagy. Works as scaffold proteins that recruit ATG proteins to the pre-autophagosome (PAS), the site of vesicle/autophagosome formation. The chain is Putative autophagy-related protein 11 from Plasmodium falciparum (isolate 3D7).